A 249-amino-acid chain; its full sequence is Acidic leucine-rich nuclear phosphoprotein 32 family member A (249 aa).

Thr-15 carries the phosphothreonine modification. Phosphoserine is present on Ser-17. LRR repeat units lie at residues 18–38 (DVKE…EGLT), 43–64 (ELEF…PKLN), 65–87 (KLKK…AEKC), and 89–110 (NLTH…EPLK). The LRRCT domain occupies 123–161 (CEVTNLNDYRENVFKLLPQLTYLDGYDRDDKEAPDSDAE). Residues 147 to 156 (GYDRDDKEAP) are compositionally biased toward basic and acidic residues. The tract at residues 147–249 (GYDRDDKEAP…EPEDEGEDDD (103 aa)) is disordered. Positions 150 to 174 (RDDKEAPDSDAEGYVEGLDDEEEDE) are necessary for tumor-suppressive function. A compositionally biased stretch (acidic residues) spans 157-230 (DSDAEGYVEG…DEEDEEELGE (74 aa)). 2 positions are modified to phosphoserine; by CK2: Ser-158 and Ser-204. An interaction with E4F1 region spans residues 165–249 (EGLDDEEEDE…EPEDEGEDDD (85 aa)).

Belongs to the ANP32 family. Component of the SET complex, composed of at least ANP32A, APEX1, HMGB2, NME1, SET and TREX1. Directly interacts with SET. Interacts with ATXN1/SCA1. Interacts with MAP1B. Interacts with ELAVL1. Part of the INHAT (inhibitor of histone acetyltransferases) complex. Interacts with E4F1. As to quaternary structure, (Microbial infection) Interacts (via C-terminus) with influenza virus A protein PB2; this interaction promotes viral replication. In terms of assembly, (Microbial infection) Interacts (via C-terminus) with influenza virus B protein PB2; this interaction promotes viral replication. (Microbial infection) Interacts (via C-terminus) with influenza virus C protein PB2; this interaction promotes viral replication by bridging viral replicase dimers together. In terms of processing, phosphorylated on serine residues, at least in part by casein kinase 2/CK2. The N-terminus is blocked. Post-translationally, some glutamate residues are glycylated by TTLL8. This modification occurs exclusively on glutamate residues and results in a glycine chain on the gamma-carboxyl group. In terms of tissue distribution, expressed in all tissues tested. Highly expressed in kidney and skeletal muscle, moderate levels of expression in brain, placenta and pancreas, and weakly expressed in lung. Found in all regions of the brain examined (amygdala, caudate nucleus, corpus callosum, hippocampus and thalamus), with highest levels in amygdala.

The protein resides in the nucleus. It is found in the cytoplasm. It localises to the endoplasmic reticulum. In terms of biological role, multifunctional protein that is involved in the regulation of many processes including tumor suppression, apoptosis, cell cycle progression or transcription. Promotes apoptosis by favouring the activation of caspase-9/CASP9 and allowing apoptosome formation. In addition, plays a role in the modulation of histone acetylation and transcription as part of the INHAT (inhibitor of histone acetyltransferases) complex. Inhibits the histone-acetyltranferase activity of EP300/CREBBP (CREB-binding protein) and EP300/CREBBP-associated factor by histone masking. Preferentially binds to unmodified histone H3 and sterically inhibiting its acetylation and phosphorylation leading to cell growth inhibition. Participates in other biochemical processes such as regulation of mRNA nuclear-to-cytoplasmic translocation and stability by its association with ELAVL1 (Hu-antigen R). Plays a role in E4F1-mediated transcriptional repression as well as inhibition of protein phosphatase 2A. (Microbial infection) Plays an essential role in influenza A, B and C viral genome replication. Mechanistically, mediates the assembly of the viral replicase asymmetric dimers composed of PB1, PB2 and PA via its N-terminal region. Also plays an essential role in foamy virus mRNA export from the nucleus. This is Acidic leucine-rich nuclear phosphoprotein 32 family member A (ANP32A) from Homo sapiens (Human).